Here is a 306-residue protein sequence, read N- to C-terminus: UDP-3-O-acyl-N-acetylglucosamine deacetylase (306 aa).

The Zn(2+) site is built by His79, His238, and Asp242. The active-site Proton donor is the His265.

Belongs to the LpxC family. Zn(2+) serves as cofactor.

The enzyme catalyses a UDP-3-O-[(3R)-3-hydroxyacyl]-N-acetyl-alpha-D-glucosamine + H2O = a UDP-3-O-[(3R)-3-hydroxyacyl]-alpha-D-glucosamine + acetate. It participates in glycolipid biosynthesis; lipid IV(A) biosynthesis; lipid IV(A) from (3R)-3-hydroxytetradecanoyl-[acyl-carrier-protein] and UDP-N-acetyl-alpha-D-glucosamine: step 2/6. Functionally, catalyzes the hydrolysis of UDP-3-O-myristoyl-N-acetylglucosamine to form UDP-3-O-myristoylglucosamine and acetate, the committed step in lipid A biosynthesis. The polypeptide is UDP-3-O-acyl-N-acetylglucosamine deacetylase (Shewanella sp. (strain W3-18-1)).